Here is a 446-residue protein sequence, read N- to C-terminus: Tubulin beta-4 chain (446 aa).

GTP contacts are provided by Gln-11, Glu-69, Ser-138, Gly-142, Thr-143, Gly-144, Asn-204, and Asn-226. Residue Glu-69 participates in Mg(2+) binding. Residues 417-426 are compositionally biased toward polar residues; that stretch reads DLVSEYQQYQ. Positions 417–446 are disordered; the sequence is DLVSEYQQYQDATADEEGDYEDEDEALHDE. Over residues 429–446 the composition is skewed to acidic residues; that stretch reads TADEEGDYEDEDEALHDE.

It belongs to the tubulin family. Dimer of alpha and beta chains. A typical microtubule is a hollow water-filled tube with an outer diameter of 25 nm and an inner diameter of 15 nM. Alpha-beta heterodimers associate head-to-tail to form protofilaments running lengthwise along the microtubule wall with the beta-tubulin subunit facing the microtubule plus end conferring a structural polarity. Microtubules usually have 13 protofilaments but different protofilament numbers can be found in some organisms and specialized cells. It depends on Mg(2+) as a cofactor.

It is found in the cytoplasm. The protein resides in the cytoskeleton. Its function is as follows. Tubulin is the major constituent of microtubules, a cylinder consisting of laterally associated linear protofilaments composed of alpha- and beta-tubulin heterodimers. Microtubules grow by the addition of GTP-tubulin dimers to the microtubule end, where a stabilizing cap forms. Below the cap, tubulin dimers are in GDP-bound state, owing to GTPase activity of alpha-tubulin. The polypeptide is Tubulin beta-4 chain (TUBB4) (Eleusine indica (Goosegrass)).